A 443-amino-acid polypeptide reads, in one-letter code: Proline--tRNA ligase (443 aa).

It belongs to the class-II aminoacyl-tRNA synthetase family. ProS type 2 subfamily. As to quaternary structure, homodimer.

It is found in the cytoplasm. The enzyme catalyses tRNA(Pro) + L-proline + ATP = L-prolyl-tRNA(Pro) + AMP + diphosphate. Functionally, catalyzes the attachment of proline to tRNA(Pro) in a two-step reaction: proline is first activated by ATP to form Pro-AMP and then transferred to the acceptor end of tRNA(Pro). In Caulobacter vibrioides (strain ATCC 19089 / CIP 103742 / CB 15) (Caulobacter crescentus), this protein is Proline--tRNA ligase.